Consider the following 613-residue polypeptide: Serine protease FAM111A (613 aa).

Positions M1–N72 are disordered. Residue K19 forms a Glycyl lysine isopeptide (Lys-Gly) (interchain with G-Cter in SUMO2) linkage. At S25 the chain carries Phosphoserine. K29 is covalently cross-linked (Glycyl lysine isopeptide (Lys-Gly) (interchain with G-Cter in SUMO2)). Residues V40 to R56 are compositionally biased toward basic and acidic residues. Residue K62 forms a Glycyl lysine isopeptide (Lys-Gly) (interchain with G-Cter in SUMO2) linkage. Catalysis depends on charge relay system residues H383, D437, and S543.

This sequence belongs to the FAM111 family. In terms of assembly, interacts (via PIP-box) with PCNA; this interaction is direct. In terms of processing, autocatalytically cleaved; autocatalytic cleavage takes place in trans.

It is found in the nucleus. It localises to the chromosome. Its subcellular location is the cytoplasm. In terms of biological role, single-stranded DNA-binding serine protease that mediates the proteolytic cleavage of covalent DNA-protein cross-links (DPCs) during DNA synthesis, thereby playing a key role in maintaining genomic integrity. DPCs are highly toxic DNA lesions that interfere with essential chromatin transactions, such as replication and transcription, and which are induced by reactive agents, such as UV light or formaldehyde. Protects replication fork from stalling by removing DPCs, such as covalently trapped topoisomerase 1 (TOP1) adducts on DNA lesion, or poly(ADP-ribose) polymerase 1 (PARP1)-DNA complexes trapped by PARP inhibitors. Required for PCNA loading on replication sites. Promotes S-phase entry and DNA synthesis. The chain is Serine protease FAM111A from Mus musculus (Mouse).